The following is a 209-amino-acid chain: Large ribosomal subunit protein uL3 (209 aa).

Position 150 is an N5-methylglutamine (Gln150).

Belongs to the universal ribosomal protein uL3 family. Part of the 50S ribosomal subunit. Forms a cluster with proteins L14 and L19. Post-translationally, methylated by PrmB.

Its function is as follows. One of the primary rRNA binding proteins, it binds directly near the 3'-end of the 23S rRNA, where it nucleates assembly of the 50S subunit. This is Large ribosomal subunit protein uL3 from Vibrio vulnificus (strain CMCP6).